A 94-amino-acid polypeptide reads, in one-letter code: MLQSNEYFSGKVKSIGFTSSSTGRASVGVMAEGEYTFGTAEPEEMTVVSGALKVLLPGTVEWKVYTAGEVFNVPVHSEFHLQVAEPTSYLCRYL.

The protein belongs to the nucleoside phosphorylase PpnP family.

It carries out the reaction a purine D-ribonucleoside + phosphate = a purine nucleobase + alpha-D-ribose 1-phosphate. The catalysed reaction is adenosine + phosphate = alpha-D-ribose 1-phosphate + adenine. It catalyses the reaction cytidine + phosphate = cytosine + alpha-D-ribose 1-phosphate. The enzyme catalyses guanosine + phosphate = alpha-D-ribose 1-phosphate + guanine. It carries out the reaction inosine + phosphate = alpha-D-ribose 1-phosphate + hypoxanthine. The catalysed reaction is thymidine + phosphate = 2-deoxy-alpha-D-ribose 1-phosphate + thymine. It catalyses the reaction uridine + phosphate = alpha-D-ribose 1-phosphate + uracil. The enzyme catalyses xanthosine + phosphate = alpha-D-ribose 1-phosphate + xanthine. Functionally, catalyzes the phosphorolysis of diverse nucleosides, yielding D-ribose 1-phosphate and the respective free bases. Can use uridine, adenosine, guanosine, cytidine, thymidine, inosine and xanthosine as substrates. Also catalyzes the reverse reactions. This is Pyrimidine/purine nucleoside phosphorylase from Salmonella paratyphi C (strain RKS4594).